The sequence spans 525 residues: GMP synthase [glutamine-hydrolyzing] (525 aa).

In terms of domain architecture, Glutamine amidotransferase type-1 spans 9 to 207; sequence RILILDFGSQ…VQDICGCEAL (199 aa). Cysteine 86 (nucleophile) is an active-site residue. Residues histidine 181 and glutamate 183 contribute to the active site. Residues 208-400 enclose the GMPS ATP-PPase domain; it reads WTASNIVEDA…LGLPYDMVYR (193 aa). Residue 235–241 coordinates ATP; sequence SGGVDSS.

As to quaternary structure, homodimer.

The catalysed reaction is XMP + L-glutamine + ATP + H2O = GMP + L-glutamate + AMP + diphosphate + 2 H(+). It functions in the pathway purine metabolism; GMP biosynthesis; GMP from XMP (L-Gln route): step 1/1. Catalyzes the synthesis of GMP from XMP. The protein is GMP synthase [glutamine-hydrolyzing] of Pseudomonas putida (strain GB-1).